Reading from the N-terminus, the 1543-residue chain is ABC multidrug transporter AFR1 (1543 aa).

The segment at 1 to 85 (MSAAGVPAEL…DGKQKRLPAD (85 aa)) is disordered. A compositionally biased stretch (polar residues) spans 18–41 (TATTQNPSGLANSQVTSGPVSSAT). Basic and acidic residues predominate over residues 62–83 (AVEAEKAEAIDAAGDGKQKRLP). An N-linked (GlcNAc...) asparagine glycan is attached at N117. Residues 119-157 (SQRSQHELHRPTTRHSVRSSFSRKDRVVSRLTQDDAEKA) form a disordered region. The span at 140-157 (SRKDRVVSRLTQDDAEKA) shows a compositional bias: basic and acidic residues. 2 N-linked (GlcNAc...) asparagine glycosylation sites follow: N208 and N398. Residues 222–474 (IKVLGIFGFN…MIGLGYRDLP (253 aa)) enclose the ABC transporter 1 domain. Transmembrane regions (helical) follow at residues 585 to 605 (FGIS…GSVY), 619 to 639 (GGLL…ELPS), 670 to 690 (VPYN…MGGL), 695 to 715 (GAFF…SAFF), and 727 to 747 (VAAR…GYMI). N-linked (GlcNAc...) asparagine glycosylation occurs at N823. The chain crosses the membrane as a helical span at residues 845 to 865 (FGILLGFFTFFMFLQMLFIEV). Positions 918–1160 (FTWEGLSYTV…VLIDYLERNG (243 aa)) constitute an ABC transporter 2 domain. ATP is bound at residue 954–961 (GASGAGKT). An N-linked (GlcNAc...) asparagine glycan is attached at N1223. The next 6 helical transmembrane spans lie at 1254-1274 (WTRL…FLQL), 1285-1305 (VFAI…IEPQ), 1336-1356 (MPYS…GVGF), 1366-1386 (FFLM…AVAA), 1391-1411 (ILIA…FCGV), and 1517-1537 (FGIF…AARF).

It belongs to the ABC transporter superfamily. ABCG family. PDR (TC 3.A.1.205) subfamily.

It is found in the cell membrane. The catalysed reaction is itraconazole(in) + ATP + H2O = itraconazole(out) + ADP + phosphate + H(+). It carries out the reaction voriconazole(in) + ATP + H2O = voriconazole(out) + ADP + phosphate + H(+). It catalyses the reaction fluconazole(in) + ATP + H2O = fluconazole(out) + ADP + phosphate + H(+). Major pleiotropic ABC efflux transporter that confers resistance to structurally and functionally unrelated compounds including azoles such as fluconazole (FLC), itraconazole (ITC), posaconazole (POS), and voriconazole (VRC). Is also able to efflux the eukaryote protein synthesis inhibitor cycloheximide (CHX). This chain is ABC multidrug transporter AFR1, found in Cryptococcus neoformans var. grubii serotype A (strain H99 / ATCC 208821 / CBS 10515 / FGSC 9487) (Filobasidiella neoformans var. grubii).